The following is a 285-amino-acid chain: Nucleotide-binding protein Avin_12760 (285 aa).

Residue 8–15 (GRSGSGKS) participates in ATP binding. 60-63 (DARN) is a binding site for GTP.

The protein belongs to the RapZ-like family.

In terms of biological role, displays ATPase and GTPase activities. This Azotobacter vinelandii (strain DJ / ATCC BAA-1303) protein is Nucleotide-binding protein Avin_12760.